The following is a 355-amino-acid chain: Molybdenum import ATP-binding protein ModC (355 aa).

The region spanning 1–233 is the ABC transporter domain; it reads MTLIVEAKQR…PSTASDRREA (233 aa). An ATP-binding site is contributed by 31-38; that stretch reads GRSGSGKT. In terms of domain architecture, Mop spans 291–355; sequence GLSALNILEA…AIIKTVALEA (65 aa).

The protein belongs to the ABC transporter superfamily. Molybdate importer (TC 3.A.1.8) family. As to quaternary structure, the complex is composed of two ATP-binding proteins (ModC), two transmembrane proteins (ModB) and a solute-binding protein (ModA).

It is found in the cell inner membrane. It catalyses the reaction molybdate(out) + ATP + H2O = molybdate(in) + ADP + phosphate + H(+). In terms of biological role, part of the ABC transporter complex ModABC involved in molybdenum import. Responsible for energy coupling to the transport system. The polypeptide is Molybdenum import ATP-binding protein ModC (Rhizobium johnstonii (strain DSM 114642 / LMG 32736 / 3841) (Rhizobium leguminosarum bv. viciae)).